The following is a 376-amino-acid chain: MKLRVLSLMVPALLVAGTAGAAEIYNKDGNKLDLYGKVDGLHYFSSNNGVDGDQSYMRFGLRGETQISDQLTGYGQWEYQANLNHAENQDNKNFTRYGFAGLKFGDYGSFDYGRNTGVLYDVAAYTDLQPEFDGMTYGADQFMFQRSSGLATYRNNDFFGLVDGLNFALQYQGKNGNGEETNNGRDVLGQNGEGYGMSMSYDMGYGISAAGAFFNSRRTSEQNGANGHQNIMGRGDKAEGYSGGLKYDANDVYLAVMFTQSYNAARFGSSDSSVYGYANKAQSFEAYAHYQFDFGLRPFVGYNQTKGKDLGRAGNGKDYGDQDLVKFVDLGATYFFNKNMSTYVDYKINLVDNNDFTDAAGINTDNVVAVGLVYQF.

The N-terminal stretch at 1 to 21 (MKLRVLSLMVPALLVAGTAGA) is a signal peptide.

It belongs to the Gram-negative porin family. In terms of assembly, homotrimer.

Its subcellular location is the cell outer membrane. Forms pores that allow passive diffusion of small molecules across the outer membrane. This chain is Outer membrane porin C (ompC), found in Serratia marcescens.